Consider the following 546-residue polypeptide: Glucose-6-phosphate isomerase (546 aa).

Glu-352 functions as the Proton donor in the catalytic mechanism. Residues His-383 and Lys-511 contribute to the active site.

The protein belongs to the GPI family.

The protein localises to the cytoplasm. The enzyme catalyses alpha-D-glucose 6-phosphate = beta-D-fructose 6-phosphate. It functions in the pathway carbohydrate biosynthesis; gluconeogenesis. Its pathway is carbohydrate degradation; glycolysis; D-glyceraldehyde 3-phosphate and glycerone phosphate from D-glucose: step 2/4. Catalyzes the reversible isomerization of glucose-6-phosphate to fructose-6-phosphate. The polypeptide is Glucose-6-phosphate isomerase (Paramagnetospirillum magneticum (strain ATCC 700264 / AMB-1) (Magnetospirillum magneticum)).